A 423-amino-acid chain; its full sequence is Serine--tRNA ligase (423 aa).

231-233 lines the L-serine pocket; that stretch reads TAE. 262-264 is a binding site for ATP; that stretch reads RSE. E285 serves as a coordination point for L-serine. ATP is bound at residue 349-352; that stretch reads EISS. L-serine is bound at residue S384.

This sequence belongs to the class-II aminoacyl-tRNA synthetase family. Type-1 seryl-tRNA synthetase subfamily. Homodimer. The tRNA molecule binds across the dimer.

It localises to the cytoplasm. It carries out the reaction tRNA(Ser) + L-serine + ATP = L-seryl-tRNA(Ser) + AMP + diphosphate + H(+). It catalyses the reaction tRNA(Sec) + L-serine + ATP = L-seryl-tRNA(Sec) + AMP + diphosphate + H(+). Its pathway is aminoacyl-tRNA biosynthesis; selenocysteinyl-tRNA(Sec) biosynthesis; L-seryl-tRNA(Sec) from L-serine and tRNA(Sec): step 1/1. In terms of biological role, catalyzes the attachment of serine to tRNA(Ser). Is also able to aminoacylate tRNA(Sec) with serine, to form the misacylated tRNA L-seryl-tRNA(Sec), which will be further converted into selenocysteinyl-tRNA(Sec). In Lactococcus lactis subsp. cremoris (strain MG1363), this protein is Serine--tRNA ligase.